Consider the following 327-residue polypeptide: DNA-directed RNA polymerase subunit alpha (327 aa).

The tract at residues 1–233 is alpha N-terminal domain (alpha-NTD); that stretch reads MVREKVKVST…NLFIPFLHVE (233 aa). Positions 264–327 are alpha C-terminal domain (alpha-CTD); the sequence is TKELAFQYIF…KKILDILEKK (64 aa).

Belongs to the RNA polymerase alpha chain family. In plastids the minimal PEP RNA polymerase catalytic core is composed of four subunits: alpha, beta, beta', and beta''. When a (nuclear-encoded) sigma factor is associated with the core the holoenzyme is formed, which can initiate transcription.

The protein localises to the plastid. Its subcellular location is the chloroplast. The catalysed reaction is RNA(n) + a ribonucleoside 5'-triphosphate = RNA(n+1) + diphosphate. In terms of biological role, DNA-dependent RNA polymerase catalyzes the transcription of DNA into RNA using the four ribonucleoside triphosphates as substrates. The protein is DNA-directed RNA polymerase subunit alpha of Capsella bursa-pastoris (Shepherd's purse).